A 148-amino-acid chain; its full sequence is Endoribonuclease YbeY (148 aa).

Residues H112, H116, and H122 each contribute to the Zn(2+) site.

This sequence belongs to the endoribonuclease YbeY family. The cofactor is Zn(2+).

The protein localises to the cytoplasm. Functionally, single strand-specific metallo-endoribonuclease involved in late-stage 70S ribosome quality control and in maturation of the 3' terminus of the 16S rRNA. The polypeptide is Endoribonuclease YbeY (Albidiferax ferrireducens (strain ATCC BAA-621 / DSM 15236 / T118) (Rhodoferax ferrireducens)).